The primary structure comprises 135 residues: Inner membrane protein YgfX (135 aa).

The Cytoplasmic segment spans residues methionine 1–serine 11. Residues methionine 1–methionine 96 are not required to inhibit FtsZ or MreB polymerization. A helical membrane pass occupies residues tryptophan 12–methionine 32. Over proline 33–serine 37 the chain is Periplasmic. Residues tyrosine 38–valine 54 traverse the membrane as a helical segment. Residues arginine 55–arginine 135 are Cytoplasmic-facing.

Interacts with MreB and FtsZ; interaction with the latter requires FtsZ residues 33-49.

It localises to the cell inner membrane. A probable inner membrane protein. Has been shown not to be a toxin, no effects on growth are seen in LB or minimal medium up to 6 or 21 hours (respectively) after induction of expression. Interacts with cytoskeletal proteins FtsZ and MreB; inhibits FtsZ GTP-dependent polymerization as well as MreB ATP-dependent polymerization. Restores production of prodigiosin antibiotic (Pig) in Serratia strains with deletions of sdhE-ygfX; overexpression of this protein and CptB also restores Pig production to a slightly lesser extent in Serratia. The protein is Inner membrane protein YgfX of Escherichia coli (strain K12).